Consider the following 725-residue polypeptide: Glutamine-dependent NAD(+) synthetase (725 aa).

Residues 5–275 (VTVATCALNQ…VEVLTATLDL (271 aa)) enclose the CN hydrolase domain. Glu-45 functions as the Proton acceptor; for glutaminase activity in the catalytic mechanism. Lys-114 functions as the For glutaminase activity in the catalytic mechanism. Residue Cys-175 is the Nucleophile; for glutaminase activity of the active site. Residues 325–706 (YHRPEEEISL…KTSQTLEEQI (382 aa)) form a ligase region. 355-362 (PLSGGVDS) is a binding site for ATP. The active site involves Ser-357.

The protein in the C-terminal section; belongs to the NAD synthetase family. Homohexamer.

It catalyses the reaction deamido-NAD(+) + L-glutamine + ATP + H2O = L-glutamate + AMP + diphosphate + NAD(+) + H(+). It functions in the pathway cofactor biosynthesis; NAD(+) biosynthesis; NAD(+) from deamido-NAD(+) (L-Gln route): step 1/1. Its function is as follows. Catalyzes the final step of the nicotinamide adenine dinucleotide (NAD) de novo synthesis pathway, the ATP-dependent amidation of deamido-NAD using L-glutamine as a nitrogen source. The polypeptide is Glutamine-dependent NAD(+) synthetase (Nadsyn1) (Rattus norvegicus (Rat)).